A 194-amino-acid chain; its full sequence is Ferredoxin, apicoplast (194 aa).

An apicoplast-targeting transit peptide spans 1-19 (MNIVILLLILTFSIKHSNT). In terms of domain architecture, 2Fe-2S ferredoxin-type spans 99 to 189 (YNITLRTNDG…DCVIETHKED (91 aa)). Residues cysteine 135, cysteine 140, cysteine 143, and cysteine 173 each contribute to the [2Fe-2S] cluster site.

It belongs to the 2Fe2S plant-type ferredoxin family. The cofactor is [2Fe-2S] cluster.

Its subcellular location is the plastid. The protein localises to the apicoplast. Its function is as follows. Ferredoxins are iron-sulfur proteins that transfer electrons in a wide variety of metabolic reactions. By transferring electrons to 4-hydroxy-3-methylbut-2-enyl diphosphate reductase LytB/IspH, plays a role in the terminal step of the DOXP/MEP pathway for isoprenoid precursor biosynthesis. This chain is Ferredoxin, apicoplast, found in Plasmodium falciparum (isolate 3D7).